Reading from the N-terminus, the 249-residue chain is Low affinity immunoglobulin gamma Fc region receptor III-A (249 aa).

The signal sequence occupies residues 1–16; sequence MWQLLPSTALLLVASA. Topologically, residues 17–198 are extracellular; that stretch reads RPQAADLPKA…IQGPPVPSTS (182 aa). 2 Ig-like C2-type domains span residues 24–104 and 119–172; these read PKAV…LEVH and EGEP…YFCR. 2 disulfides stabilise this stretch: Cys-47–Cys-88 and Cys-127–Cys-171. Residues Asn-55, Asn-63, Asn-166, and Asn-179 are each glycosylated (N-linked (GlcNAc...) asparagine). The chain crosses the membrane as a helical span at residues 199–219; it reads ALLPFWPHIPFAVVMALLFAV. At 220-249 the chain is on the cytoplasmic side; sequence DTGLYFAMQRHLHNSKRAWENSKVSWKQDP.

In terms of assembly, forms a heterooligomeric complex with ITAM-containing signaling subunits FCER1G. Interacts (via transmembrane domain) with signaling subunits; this interaction is a prerequisite for receptor complex expression on the cell surface and intracellular signal transduction. Binds the Fc region of antigen-complexed IgG.

It localises to the cell membrane. Functionally, receptor for the invariable Fc fragment of immunoglobulin gamma (IgG). Optimally activated upon binding of clustered antigen-IgG complexes displayed on cell surfaces, triggers lysis of antibody-coated cells, a process known as antibody-dependent cellular cytotoxicity (ADCC). Does not bind free monomeric IgG, thus avoiding inappropriate effector cell activation in the absence of antigenic trigger. Mediates IgG effector functions on natural killer (NK) cells. Binds antigen-IgG complexes generated upon infection and triggers NK cell-dependent cytokine production and degranulation to limit viral load and propagation. Fc-binding subunit that associates with FCER1G adapter to form functional signaling complexes. Following the engagement of antigen-IgG complexes, triggers phosphorylation of immunoreceptor tyrosine-based activation motif (ITAM)-containing adapter with subsequent activation of phosphatidylinositol 3-kinase signaling and sustained elevation of intracellular calcium that ultimately drive NK cell activation. Mediates enhanced ADCC in response to afucosylated IgGs. The sequence is that of Low affinity immunoglobulin gamma Fc region receptor III-A from Mustela putorius furo (European domestic ferret).